The sequence spans 54 residues: uncharacterized protein (54 aa).

Positions 23 to 35 (DVMQEGETAKELN) are enriched in basic and acidic residues. The disordered stretch occupies residues 23 to 54 (DVMQEGETAKELNYEGEDMQATSSAQNRQTSV). Residues 42–54 (QATSSAQNRQTSV) show a composition bias toward polar residues.

This is an uncharacterized protein from Bacillus subtilis (strain 168).